The sequence spans 226 residues: CASP-like protein 2BC1 (226 aa).

Over 1 to 37 the chain is Cytoplasmic; that stretch reads MRKHIDIVFSRLSGPILNPPPDNNVIPKTDRKLRITE. The chain crosses the membrane as a helical span at residues 38–58; it reads VILRFAVVIFALVSAIMVGTA. The Extracellular portion of the chain corresponds to 59–78; that stretch reads SGTRDLGGGIRIHAHFTLLK. A helical transmembrane segment spans residues 79–99; sequence TLPFLVIVDGILAVYSLLQGL. The Cytoplasmic portion of the chain corresponds to 100-114; the sequence is RCFLSLYMRHILLNK. The helical transmembrane segment at 115–135 threads the bilayer; the sequence is ALAWTIFCCDQALAYVIFAAA. Over 136–170 the chain is Extracellular; that stretch reads ASTAETAYISEQGLDELQWIKVCMFFRAYCFKSGA. A helical membrane pass occupies residues 171-191; it reads GMINAFLAALCMVFVSGMSVF. The Cytoplasmic portion of the chain corresponds to 192 to 226; it reads HLFRLYGEKRAYGHIAEQVVISEEAAERRNSLNGI.

It belongs to the Casparian strip membrane proteins (CASP) family. Homodimer and heterodimers.

It localises to the cell membrane. This chain is CASP-like protein 2BC1, found in Picea sitchensis (Sitka spruce).